The following is a 1342-amino-acid chain: DNA-directed RNA polymerase subunit beta (1342 aa).

Belongs to the RNA polymerase beta chain family. In terms of assembly, the RNAP catalytic core consists of 2 alpha, 1 beta, 1 beta' and 1 omega subunit. When a sigma factor is associated with the core the holoenzyme is formed, which can initiate transcription.

The catalysed reaction is RNA(n) + a ribonucleoside 5'-triphosphate = RNA(n+1) + diphosphate. In terms of biological role, DNA-dependent RNA polymerase catalyzes the transcription of DNA into RNA using the four ribonucleoside triphosphates as substrates. This is DNA-directed RNA polymerase subunit beta from Aliivibrio fischeri (strain ATCC 700601 / ES114) (Vibrio fischeri).